A 290-amino-acid polypeptide reads, in one-letter code: MDIVTPILTPFTKEGKIDVEKLKAHAKFLIDNGIDLLFVNGTTGLGPALSKEEKLTTLKTIYDVTNKVIFQVGSLNINDVIDLVKASKDFDIVGIASYPPFYFPRLPEKFLLKYFTTIANYSPHSLYIYNYPLATGYDISAKIVYQMKDLITGLKDTNQDLSHSLEYKILMPNLKVYNGSDSLVFYSLTSLDGSVTAASNYLPHVMKKMKEHITSGQVSKAIELQKLINKALDISRKYGQLSAIYYLVKEFLGYDVGYPRGPIFPLEEDEVKALLSEIQPVKKEIERAVS.

Residues 42–43 (TT), 129–131 (YNY), and 155–157 (KDT) contribute to the substrate site. The active-site Schiff-base intermediate with substrate is lysine 155.

Belongs to the DapA family. KDPG aldolase subfamily. Homotetramer; dimer of dimers.

It catalyses the reaction 2-dehydro-3-deoxy-6-phospho-D-gluconate = D-glyceraldehyde 3-phosphate + pyruvate. The catalysed reaction is 2-dehydro-3-deoxy-6-phospho-D-galactonate = D-glyceraldehyde 3-phosphate + pyruvate. It functions in the pathway carbohydrate acid metabolism; 2-dehydro-3-deoxy-D-gluconate degradation; D-glyceraldehyde 3-phosphate and pyruvate from 2-dehydro-3-deoxy-D-gluconate: step 2/2. Its function is as follows. Involved in the degradation of glucose and galactose via the Entner-Doudoroff pathway. Catalyzes the reversible cleavage of 2-keto-3-deoxy-6-phosphogluconate (KDPG) and 2-keto-3-deoxygluconate (KDG) forming pyruvate and glyceraldehyde 3-phosphate or glyceraldehyde, respectively. It is also able to catalyze the reversible cleavage of 2-keto-3-deoxy-6-phosphogalactonate (KDPGal) and 2-keto-3-deoxygalactonate (KDGal). The polypeptide is 2-dehydro-3-deoxy-phosphogluconate/2-dehydro-3-deoxy-6-phosphogalactonate aldolase (kdgA) (Sulfurisphaera tokodaii (strain DSM 16993 / JCM 10545 / NBRC 100140 / 7) (Sulfolobus tokodaii)).